The sequence spans 430 residues: Asparagine--tRNA ligase (430 aa).

The protein belongs to the class-II aminoacyl-tRNA synthetase family. Homodimer.

Its subcellular location is the cytoplasm. It catalyses the reaction tRNA(Asn) + L-asparagine + ATP = L-asparaginyl-tRNA(Asn) + AMP + diphosphate + H(+). The chain is Asparagine--tRNA ligase from Bacillus licheniformis (strain ATCC 14580 / DSM 13 / JCM 2505 / CCUG 7422 / NBRC 12200 / NCIMB 9375 / NCTC 10341 / NRRL NRS-1264 / Gibson 46).